Reading from the N-terminus, the 386-residue chain is Zinc finger CCCH domain-containing protein 39 (386 aa).

The tract at residues 1 to 90 (MDSSYSDSRP…SSSNPWMVPS (90 aa)) is disordered. Over residues 20-37 (WNQTQMIDSMANPMNNEQ) the composition is skewed to polar residues. Residues 43 to 58 (LSESQSQSQPSQQLQP) show a composition bias toward low complexity. A compositionally biased stretch (polar residues) spans 72-85 (NPASSFPQPSSSNP). Residues 104–131 (FYKTRMCAKFRAGTCRNGELCNFAHGIE) form a C3H1-type 1 zinc finger. The tract at residues 136–166 (PPSNWQEIVGPPPAGQDRERERERERERERP) is disordered. Residues 151–166 (QDRERERERERERERP) are compositionally biased toward basic and acidic residues. 2 consecutive C3H1-type zinc fingers follow at residues 183–211 (ILRMKLCRKFCFGEECPYGDRCNFIHEDL) and 269–297 (YWKTRLCMKFDITGQCPFGDKCHFAHGQA).

The protein is Zinc finger CCCH domain-containing protein 39 of Arabidopsis thaliana (Mouse-ear cress).